The chain runs to 464 residues: MDNGMLSRFIMTKTLLVFCISMTLSSHFGFSQMPTSSVQDETNDNITIFTRILDGLLDGYDNRLRPGLGERITQVRTDIYVTSFGPVSDTEMEYTIDVFFRQSWKDERLRFKGPMQRLPLNNLLASKIWTPDTFFHNGKKSIAHNMTTPNKLLRLEDDGTLLYTMRLTISAECPMQLEDFPMDAHACPLKFGSYAYPNSEVVYVWTNGSTKSVVVAEDGSRLNQYHLMGQTVGTENISTSTGEYTIMTAHFHLKRKIGYFVIQTYLPCIMTVILSQVSFWLNRESVPARTVFGVTTVLTMTTLSISARNSLPKVAYATAMDWFIAVCYAFVFSALIEFATVNYFTKRGWAWDGKKALEAAKIKKKERELILNKSTNAFTTGKLTHPPNIPKEQLPGGTGNAVGTASIRASEEKTSESKKTYNSISKIDKMSRIVFPILFGTFNLVYWATYLNREPVIKGATSPK.

The N-terminal stretch at 1 to 25 (MDNGMLSRFIMTKTLLVFCISMTLS) is a signal peptide. At 26 to 260 (SHFGFSQMPT…FHLKRKIGYF (235 aa)) the chain is on the extracellular side. The N-linked (GlcNAc...) asparagine glycan is linked to Asn-45. Arg-101 contacts 4-aminobutanoate. N-linked (GlcNAc...) asparagine glycosylation occurs at Asn-145. Thr-164 contacts 4-aminobutanoate. Cys-173 and Cys-187 are disulfide-bonded. N-linked (GlcNAc...) asparagine glycosylation is found at Asn-207 and Asn-236. The next 3 helical transmembrane spans lie at 261–281 (VIQT…SFWL), 287–308 (PART…ISAR), and 319–340 (AMDW…EFAT). Topologically, residues 341-429 (VNYFTKRGWA…TYNSISKIDK (89 aa)) are cytoplasmic. Lys-355 is covalently cross-linked (Glycyl lysine isopeptide (Lys-Gly) (interchain with G-Cter in ubiquitin)). Residues 382–414 (KLTHPPNIPKEQLPGGTGNAVGTASIRASEEKT) form a disordered region. Residues 430 to 450 (MSRIVFPILFGTFNLVYWATY) form a helical membrane-spanning segment.

It belongs to the ligand-gated ion channel (TC 1.A.9) family. Gamma-aminobutyric acid receptor (TC 1.A.9.5) subfamily. GABRA5 sub-subfamily. In terms of assembly, heteropentamer, formed by a combination of alpha (GABRA1-6), beta (GABRB1-3), gamma (GABRG1-3), delta (GABRD), epsilon (GABRE), rho (GABRR1-3), pi (GABRP) and theta (GABRQ) chains, each subunit exhibiting distinct physiological and pharmacological properties. As to expression, expressed in brain areas such as cerebral cortex, hippocampal formation and olfactory bulb granular layer.

The protein resides in the postsynaptic cell membrane. The protein localises to the cell membrane. It carries out the reaction chloride(in) = chloride(out). Allosterically potentiated by alphaxalone. Allosterically inhibited by pregnenolone sulfate. Inhibited by zinc and lanthanum. Functionally, alpha subunit of the heteropentameric ligand-gated chloride channel gated by gamma-aminobutyric acid (GABA), a major inhibitory neurotransmitter in the brain. GABA-gated chloride channels, also named GABA(A) receptors (GABAAR), consist of five subunits arranged around a central pore and contain GABA active binding site(s) located at the alpha and beta subunit interface(s). When activated by GABA, GABAARs selectively allow the flow of chloride anions across the cell membrane down their electrochemical gradient. GABAARs containing alpha-5/GABRA5 subunits are mainly extrasynaptic and contribute to the tonic GABAergic inhibition in the hippocampus. Extrasynaptic alpha-5-containing GABAARs in CA1 pyramidal neurons play a role in learning and memory processes. This Rattus norvegicus (Rat) protein is Gamma-aminobutyric acid receptor subunit alpha-5.